The following is a 456-amino-acid chain: Peptide chain release factor PrfB1, chloroplastic (456 aa).

A chloroplast-targeting transit peptide spans 1 to 58 (MSMELTVLGPLAGRSFAIAGKPKLLLLRPTNLPLLRLSLPLSLPNFSSSSRFNSPIVF).

Belongs to the prokaryotic/mitochondrial release factor family. As to expression, expressed in leaves, stems and flowers.

Its subcellular location is the plastid. The protein localises to the chloroplast stroma. In terms of biological role, directs the termination of translation in response to the peptide chain termination codon UGA. Required for the proper translation, stability and normal processing of UGA-containing polycistronic transcripts in chloroplasts. The sequence is that of Peptide chain release factor PrfB1, chloroplastic from Arabidopsis thaliana (Mouse-ear cress).